The sequence spans 249 residues: Probable transcriptional regulatory protein GOX1679 (249 aa).

The protein belongs to the TACO1 family.

The protein localises to the cytoplasm. The polypeptide is Probable transcriptional regulatory protein GOX1679 (Gluconobacter oxydans (strain 621H) (Gluconobacter suboxydans)).